A 103-amino-acid polypeptide reads, in one-letter code: Co-chaperonin GroES (103 aa).

Belongs to the GroES chaperonin family. Heptamer of 7 subunits arranged in a ring. Interacts with the chaperonin GroEL.

The protein resides in the cytoplasm. Together with the chaperonin GroEL, plays an essential role in assisting protein folding. The GroEL-GroES system forms a nano-cage that allows encapsulation of the non-native substrate proteins and provides a physical environment optimized to promote and accelerate protein folding. GroES binds to the apical surface of the GroEL ring, thereby capping the opening of the GroEL channel. The sequence is that of Co-chaperonin GroES from Prochlorococcus marinus subsp. pastoris (strain CCMP1986 / NIES-2087 / MED4).